Reading from the N-terminus, the 523-residue chain is Ribonuclease Y (523 aa).

The chain crosses the membrane as a helical span at residues 3–23 (VWYAIGSIIFGLLVGVSVYLI). Positions 213–279 (LVNVINLPND…TKTIEKLVED (67 aa)) constitute a KH domain. The HD domain maps to 339 to 432 (ALGHSIEVAN…VCAADTLSAA (94 aa)).

Belongs to the RNase Y family.

It is found in the cell membrane. Endoribonuclease that initiates mRNA decay. The sequence is that of Ribonuclease Y from Helicobacter hepaticus (strain ATCC 51449 / 3B1).